Here is a 452-residue protein sequence, read N- to C-terminus: Cell division protein FtsZ (452 aa).

Residues 24–28, 111–113, glutamate 142, arginine 146, and aspartate 190 each bind GTP; these read GAGSN and GTG.

The protein belongs to the FtsZ family. As to quaternary structure, homodimer. Polymerizes to form a dynamic ring structure in a strictly GTP-dependent manner. Interacts directly with several other division proteins.

The protein resides in the cytoplasm. Essential cell division protein that forms a contractile ring structure (Z ring) at the future cell division site. The regulation of the ring assembly controls the timing and the location of cell division. One of the functions of the FtsZ ring is to recruit other cell division proteins to the septum to produce a new cell wall between the dividing cells. Binds GTP and shows GTPase activity. This chain is Cell division protein FtsZ, found in Rickettsia felis (strain ATCC VR-1525 / URRWXCal2) (Rickettsia azadi).